Consider the following 387-residue polypeptide: 2-deoxystreptamine glucosyltransferase (387 aa).

This sequence belongs to the glycosyltransferase group 1 family.

It carries out the reaction 2-deoxystreptamine + UDP-N-acetyl-alpha-D-glucosamine = 2'-N-acetylparomamine + UDP + H(+). The enzyme catalyses 2-deoxystreptamine + UDP-alpha-D-glucose = 2'-deamino-2'-hydroxyparomamine + UDP + H(+). The protein operates within antibiotic biosynthesis; kanamycin biosynthesis. Its function is as follows. Glycosyltransferase involved in the biosynthesis of kanamycin by mediating conversion of 2-deoxystreptamine (2-DOS) to 2'-N-acetylparomamine using UDP-alpha-D-glucose as sugar donor. Can also accept UDP-alpha-D-glucosamine, but with a much lower activity compared to UDP-alpha-D-glucose. The polypeptide is 2-deoxystreptamine glucosyltransferase (kanF) (Streptomyces kanamyceticus).